The following is a 474-amino-acid chain: tRNA-2-methylthio-N(6)-dimethylallyladenosine synthase (474 aa).

Positions 3 to 120 (KKLHIKTWGC…LPEMIEQVRR (118 aa)) constitute an MTTase N-terminal domain. [4Fe-4S] cluster is bound by residues Cys-12, Cys-49, Cys-83, Cys-157, Cys-161, and Cys-164. The Radical SAM core domain occupies 143–375 (RAEGPTAFVS…QDRITQQAMR (233 aa)). A TRAM domain is found at 378–441 (RHMMGTVQRI…TNSLRGKFIR (64 aa)).

Belongs to the methylthiotransferase family. MiaB subfamily. As to quaternary structure, monomer. The cofactor is [4Fe-4S] cluster.

Its subcellular location is the cytoplasm. It catalyses the reaction N(6)-dimethylallyladenosine(37) in tRNA + (sulfur carrier)-SH + AH2 + 2 S-adenosyl-L-methionine = 2-methylsulfanyl-N(6)-dimethylallyladenosine(37) in tRNA + (sulfur carrier)-H + 5'-deoxyadenosine + L-methionine + A + S-adenosyl-L-homocysteine + 2 H(+). Functionally, catalyzes the methylthiolation of N6-(dimethylallyl)adenosine (i(6)A), leading to the formation of 2-methylthio-N6-(dimethylallyl)adenosine (ms(2)i(6)A) at position 37 in tRNAs that read codons beginning with uridine. The sequence is that of tRNA-2-methylthio-N(6)-dimethylallyladenosine synthase from Shewanella oneidensis (strain ATCC 700550 / JCM 31522 / CIP 106686 / LMG 19005 / NCIMB 14063 / MR-1).